Here is a 192-residue protein sequence, read N- to C-terminus: Fe/S biogenesis protein NfuA (192 aa).

The [4Fe-4S] cluster site is built by C149 and C152.

The protein belongs to the NfuA family. In terms of assembly, homodimer. [4Fe-4S] cluster serves as cofactor.

Its function is as follows. Involved in iron-sulfur cluster biogenesis. Binds a 4Fe-4S cluster, can transfer this cluster to apoproteins, and thereby intervenes in the maturation of Fe/S proteins. Could also act as a scaffold/chaperone for damaged Fe/S proteins. The polypeptide is Fe/S biogenesis protein NfuA (Shewanella sp. (strain MR-7)).